Here is a 799-residue protein sequence, read N- to C-terminus: Putative mRNA-capping enzyme P5 (799 aa).

Belongs to the phytoreovirus protein P5 family.

The protein resides in the virion. Its subcellular location is the host cytoplasm. It carries out the reaction a 5'-end diphospho-ribonucleoside in mRNA + GTP + H(+) = a 5'-end (5'-triphosphoguanosine)-ribonucleoside in mRNA + diphosphate. It participates in mRNA processing; mRNA capping. In terms of biological role, enzyme involved in mRNA capping (Potential). Binds to GTP and might have guanylyltransferase activity. Together with the RNA-directed RNA polymerase P1 and protein P7, forms an transcriptional complex positioned near the channels situated at each of the five-fold vertices of the core. The chain is Putative mRNA-capping enzyme P5 from Nephotettix cincticeps (Green rice leafhopper).